Consider the following 342-residue polypeptide: S-adenosylmethionine:tRNA ribosyltransferase-isomerase (342 aa).

It belongs to the QueA family. Monomer.

The protein localises to the cytoplasm. The enzyme catalyses 7-aminomethyl-7-carbaguanosine(34) in tRNA + S-adenosyl-L-methionine = epoxyqueuosine(34) in tRNA + adenine + L-methionine + 2 H(+). It participates in tRNA modification; tRNA-queuosine biosynthesis. Its function is as follows. Transfers and isomerizes the ribose moiety from AdoMet to the 7-aminomethyl group of 7-deazaguanine (preQ1-tRNA) to give epoxyqueuosine (oQ-tRNA). This chain is S-adenosylmethionine:tRNA ribosyltransferase-isomerase, found in Streptococcus pneumoniae (strain ATCC BAA-255 / R6).